The primary structure comprises 154 residues: Ribonuclease H (154 aa).

Residues 5–146 (EQNIVYLYCD…ADELANRGID (142 aa)) enclose the RNase H type-1 domain. Residues Asp14, Glu52, Asp74, and Asp138 each contribute to the Mg(2+) site.

Belongs to the RNase H family. As to quaternary structure, monomer. Mg(2+) is required as a cofactor.

Its subcellular location is the cytoplasm. It catalyses the reaction Endonucleolytic cleavage to 5'-phosphomonoester.. In terms of biological role, endonuclease that specifically degrades the RNA of RNA-DNA hybrids. The chain is Ribonuclease H from Coxiella burnetii (strain CbuG_Q212) (Coxiella burnetii (strain Q212)).